The sequence spans 278 residues: ABC transporter I family member 11, chloroplastic (278 aa).

The N-terminal 49 residues, 1-49 (MAVSTFSSPTPVFGIAEPPASFSSTAIGWKQPLRFRRTKKPRVISCDYS), are a transit peptide targeting the chloroplast. The ABC transporter domain occupies 51 to 278 (IEVRDVCYRP…GVLVAERPPL (228 aa)). Residue 85–92 (GKSGSGKT) coordinates ATP.

This sequence belongs to the ABC transporter superfamily. ABCI family.

The protein localises to the plastid. It is found in the chloroplast. This is ABC transporter I family member 11, chloroplastic (ABCI11) from Arabidopsis thaliana (Mouse-ear cress).